The following is a 65-amino-acid chain: Photosystem II reaction center protein H (65 aa).

The chain crosses the membrane as a helical span at residues 27–47; that stretch reads GAVPVMAFIGVLLLVFLVIML.

This sequence belongs to the PsbH family. In terms of assembly, PSII is composed of 1 copy each of membrane proteins PsbA, PsbB, PsbC, PsbD, PsbE, PsbF, PsbH, PsbI, PsbJ, PsbK, PsbL, PsbM, PsbT, PsbX, PsbY, Psb30/Ycf12, peripheral proteins PsbO, CyanoQ (PsbQ), PsbU, PsbV and a large number of cofactors. It forms dimeric complexes.

It is found in the cellular thylakoid membrane. In terms of biological role, one of the components of the core complex of photosystem II (PSII), required for its stability and/or assembly. PSII is a light-driven water:plastoquinone oxidoreductase that uses light energy to abstract electrons from H(2)O, generating O(2) and a proton gradient subsequently used for ATP formation. It consists of a core antenna complex that captures photons, and an electron transfer chain that converts photonic excitation into a charge separation. The chain is Photosystem II reaction center protein H from Prochlorococcus marinus (strain NATL1A).